Reading from the N-terminus, the 482-residue chain is MFS-type transporter cnsL (482 aa).

The helical transmembrane segment at 73-93 (LFVCATLSGLDKTAISAAAVY) threads the bilayer. N100 is a glycosylation site (N-linked (GlcNAc...) asparagine). 9 helical membrane-spanning segments follow: residues 108–128 (WIGS…AYCL), 131–151 (VPAV…EMSV), 170–190 (IILN…VGYY), 199–219 (IIFL…YFVL), 304–324 (LLAM…SYLA), 333–353 (AIVT…YALP), 361–381 (LVGL…VSVY), 392–412 (ITLY…GPQT), and 426–446 (VAMI…GVVC).

Belongs to the major facilitator superfamily. Allantoate permease family.

It localises to the cell membrane. MFS-type transporter; part of the gene cluster that mediates the biosynthesis of communesins, a prominent class of indole alkaloids with great potential as pharmaceuticals. With the MFS transporter cnsO, is most likely responsible for cummunesins secretion and thereby may contribute to intrinsic resistance. The protein is MFS-type transporter cnsL of Penicillium expansum (Blue mold rot fungus).